The chain runs to 625 residues: Probable potassium transport system protein Kup (625 aa).

The next 12 membrane-spanning stretches (helical) occupy residues 10–30, 50–70, 102–122, 142–162, 172–192, 215–235, 250–270, 284–304, 340–360, 369–389, 397–417, and 422–442; these read LAAL…TSPL, LLGV…LKYV, YFPL…DSVI, FDPY…SVQA, FGPI…VNII, FLAF…EALY, WFLV…ALLL, LGAW…IIAS, IYIP…VVGF, AYGI…FFVI, LLLC…LFSA, and LFHG…LMLT.

The protein belongs to the HAK/KUP transporter (TC 2.A.72) family.

The protein resides in the cell inner membrane. It carries out the reaction K(+)(in) + H(+)(in) = K(+)(out) + H(+)(out). Functionally, transport of potassium into the cell. Likely operates as a K(+):H(+) symporter. The chain is Probable potassium transport system protein Kup from Janthinobacterium sp. (strain Marseille) (Minibacterium massiliensis).